Here is a 242-residue protein sequence, read N- to C-terminus: Required for respiratory growth protein 7, mitochondrial (242 aa).

This sequence belongs to the RRG7 family.

The protein localises to the mitochondrion. The sequence is that of Required for respiratory growth protein 7, mitochondrial (RRG7) from Saccharomyces cerevisiae (strain ATCC 204508 / S288c) (Baker's yeast).